Reading from the N-terminus, the 288-residue chain is Phospholipid phosphatase 2 (288 aa).

At 1–4 (MQRR) the chain is on the cytoplasmic side. Residues 5 to 25 (WVFVLLDVLCLLVASLPFAIL) traverse the membrane as a helical segment. Over 26-51 (TLVNAPYKRGFYCGDDSIRYPYRPDT) the chain is Lumenal. A helical transmembrane segment spans residues 52–72 (ITHGLMAGVTITATVILVSAG). Residues 73-87 (EAYLVYTDRLYSRSD) are Cytoplasmic-facing. A helical membrane pass occupies residues 88–108 (FNNYVAAVYKVLGTFLFGAAV). Residues 109-162 (SQSLTDLAKYMIGRLRPNFLAVCDPDWSRVNCSVYVQLEKVCRGNPADVTEARL) lie on the Lumenal side of the membrane. A phosphatase sequence motif I region spans residues 117–125 (KYMIGRLRP). Asn-139 carries N-linked (GlcNAc...) asparagine glycosylation. Residues 163 to 183 (SFYSGHSSFGMYCMVFLALYV) traverse the membrane as a helical segment. A phosphatase sequence motif II region spans residues 165–168 (YSGH). His-168 (proton donors) is an active-site residue. Over 184-196 (QARLCWKWARLLR) the chain is Cytoplasmic. The helical transmembrane segment at 197-217 (PTVQFFLVAFALYVGYTRVSD) threads the bilayer. Residues 213-224 (TRVSDYKHHWSD) form a phosphatase sequence motif III region. The Lumenal portion of the chain corresponds to 218 to 226 (YKHHWSDVL). The active-site Nucleophile is the His-220. A helical membrane pass occupies residues 227 to 247 (VGLLQGALVAALTVCYISDFF). Topologically, residues 248–288 (KARPPQHCLKEEELERKPSLSLTLTLGEADHNHYGYPHSSS) are cytoplasmic.

It belongs to the PA-phosphatase related phosphoesterase family. In terms of assembly, forms functional homodimers and homooligomers. Can also form heterooligomers with PLPP1 and PLPP3. Post-translationally, N-glycosylated. In terms of tissue distribution, found mainly in brain, pancreas and placenta.

It is found in the membrane. It localises to the cell membrane. Its subcellular location is the early endosome membrane. The protein localises to the endoplasmic reticulum membrane. It catalyses the reaction a 1,2-diacyl-sn-glycero-3-phosphate + H2O = a 1,2-diacyl-sn-glycerol + phosphate. The enzyme catalyses 1,2-dihexadecanoyl-sn-glycero-3-phosphate + H2O = 1,2-dihexadecanoyl-sn-glycerol + phosphate. The catalysed reaction is 1,2-di-(9Z-octadecenoyl)-sn-glycero-3-phosphate + H2O = 1,2-di-(9Z-octadecenoyl)-sn-glycerol + phosphate. It carries out the reaction a monoacyl-sn-glycero-3-phosphate + H2O = a monoacylglycerol + phosphate. It catalyses the reaction (9Z)-octadecenoyl-sn-glycero-3-phosphate + H2O = (9Z-octadecenoyl)-glycerol + phosphate. The enzyme catalyses sphing-4-enine 1-phosphate + H2O = sphing-4-enine + phosphate. The catalysed reaction is an N-acylsphing-4-enine 1-phosphate + H2O = an N-acylsphing-4-enine + phosphate. It carries out the reaction N-(octanoyl)-sphing-4-enine-1-phosphate + H2O = N-octanoylsphing-4-enine + phosphate. It catalyses the reaction N-(9Z-octadecenoyl)-ethanolamine phosphate + H2O = N-(9Z-octadecenoyl) ethanolamine + phosphate. It participates in lipid metabolism; phospholipid metabolism. With respect to regulation, magnesium-independent phospholipid phosphatase. Insensitive to N-ethylmaleimide. Inhibited by sphingosine, zinc ions and modestly by propanolol. Its function is as follows. Magnesium-independent phospholipid phosphatase that catalyzes the dephosphorylation of a variety of glycerolipid and sphingolipid phosphate esters including phosphatidate/PA, lysophosphatidate/LPA, sphingosine 1-phosphate/S1P and ceramide 1-phosphate/C1P. Has no apparent extracellular phosphatase activity and therefore most probably acts intracellularly. Also acts on N-oleoyl ethanolamine phosphate/N-(9Z-octadecenoyl)-ethanolamine phosphate, a potential physiological compound. Through dephosphorylation of these bioactive lipid mediators produces new bioactive compounds and may regulate signal transduction in different cellular processes. Indirectly regulates, for instance, cell cycle G1/S phase transition through its phospholipid phosphatase activity. The protein is Phospholipid phosphatase 2 of Homo sapiens (Human).